A 207-amino-acid chain; its full sequence is Ribosomal RNA small subunit methyltransferase G (207 aa).

S-adenosyl-L-methionine-binding positions include Gly73, Leu78, 124–125 (VE), and Arg139.

Belongs to the methyltransferase superfamily. RNA methyltransferase RsmG family.

The protein resides in the cytoplasm. It catalyses the reaction guanosine(527) in 16S rRNA + S-adenosyl-L-methionine = N(7)-methylguanosine(527) in 16S rRNA + S-adenosyl-L-homocysteine. In terms of biological role, specifically methylates the N7 position of guanine in position 527 of 16S rRNA. The sequence is that of Ribosomal RNA small subunit methyltransferase G from Salmonella choleraesuis (strain SC-B67).